We begin with the raw amino-acid sequence, 359 residues long: Serum paraoxonase/arylesterase 1 (359 aa).

Cysteine 42 and cysteine 353 are oxidised to a cystine. A glycan (N-linked (GlcNAc...) asparagine) is linked at asparagine 50. Ca(2+)-binding residues include glutamate 53 and aspartate 54. Histidine 115 functions as the Proton acceptor in the catalytic mechanism. Isoleucine 117, asparagine 168, aspartate 169, and asparagine 224 together coordinate Ca(2+). N-linked (GlcNAc...) asparagine glycosylation occurs at asparagine 253. Positions 269 and 270 each coordinate Ca(2+). Asparagine 270 and asparagine 324 each carry an N-linked (GlcNAc...) asparagine glycan.

This sequence belongs to the paraoxonase family. As to quaternary structure, homodimer. Interacts with CLU. The cofactor is Ca(2+). In terms of processing, glycosylated. The signal sequence is not cleaved. Plasma. Associated with HDL.

It localises to the secreted. The protein resides in the extracellular space. It carries out the reaction a phenyl acetate + H2O = a phenol + acetate + H(+). The enzyme catalyses An aryl dialkyl phosphate + H2O = dialkyl phosphate + an aryl alcohol.. It catalyses the reaction an N-acyl-L-homoserine lactone + H2O = an N-acyl-L-homoserine + H(+). In terms of biological role, hydrolyzes the toxic metabolites of a variety of organophosphorus insecticides. Capable of hydrolyzing a broad spectrum of organophosphate substrates and lactones, and a number of aromatic carboxylic acid esters. Mediates an enzymatic protection of low density lipoproteins against oxidative modification. The polypeptide is Serum paraoxonase/arylesterase 1 (PON1) (Oryctolagus cuniculus (Rabbit)).